Here is a 408-residue protein sequence, read N- to C-terminus: Dual-specificity RNA methyltransferase RlmN (408 aa).

Residue Glu126 is the Proton acceptor of the active site. A Radical SAM core domain is found at 132 to 373; that stretch reads EEGRGTLCLS…NQAGYASPIR (242 aa). Residues Cys139 and Cys384 are joined by a disulfide bond. Residues Cys146, Cys150, and Cys153 each coordinate [4Fe-4S] cluster. S-adenosyl-L-methionine is bound by residues 210–211, Ser242, 264–266, and Asn341; these read GE and SLH. The active-site S-methylcysteine intermediate is the Cys384.

Belongs to the radical SAM superfamily. RlmN family. The cofactor is [4Fe-4S] cluster.

It localises to the cytoplasm. The catalysed reaction is adenosine(2503) in 23S rRNA + 2 reduced [2Fe-2S]-[ferredoxin] + 2 S-adenosyl-L-methionine = 2-methyladenosine(2503) in 23S rRNA + 5'-deoxyadenosine + L-methionine + 2 oxidized [2Fe-2S]-[ferredoxin] + S-adenosyl-L-homocysteine. It catalyses the reaction adenosine(37) in tRNA + 2 reduced [2Fe-2S]-[ferredoxin] + 2 S-adenosyl-L-methionine = 2-methyladenosine(37) in tRNA + 5'-deoxyadenosine + L-methionine + 2 oxidized [2Fe-2S]-[ferredoxin] + S-adenosyl-L-homocysteine. Functionally, specifically methylates position 2 of adenine 2503 in 23S rRNA and position 2 of adenine 37 in tRNAs. m2A2503 modification seems to play a crucial role in the proofreading step occurring at the peptidyl transferase center and thus would serve to optimize ribosomal fidelity. This Bartonella tribocorum (strain CIP 105476 / IBS 506) protein is Dual-specificity RNA methyltransferase RlmN.